An 83-amino-acid chain; its full sequence is Three-finger toxin MALT0058C (83 aa).

The signal sequence occupies residues 1–21 (MKTLLLTLVVVTIVCLDFGHT). 4 disulfides stabilise this stretch: C24–C45, C38–C62, C64–C75, and C76–C81.

The protein belongs to the three-finger toxin family. Short-chain subfamily. Type I alpha-neurotoxin sub-subfamily. In terms of tissue distribution, expressed by the venom gland.

It is found in the secreted. In terms of biological role, binds to muscle nicotinic acetylcholine receptor (nAChR) and inhibits acetylcholine from binding to the receptor, thereby impairing neuromuscular transmission. The chain is Three-finger toxin MALT0058C from Micrurus altirostris (Uruguayan coral snake).